A 481-amino-acid polypeptide reads, in one-letter code: Zinc finger CCCH domain-containing protein 4 (481 aa).

The segment at 157–184 (RNRAHVCSFFIRGECTRGAECPYRHEMP) adopts a C3H1-type zinc-finger fold. The RRM domain maps to 228–301 (KTLYVGGLNS…QRLKLTWGRP (74 aa)). Residues 329 to 481 (HNQPPPMQQY…DVSTATGSSQ (153 aa)) are disordered. Positions 331–345 (QPPPMQQYYMHPPPA) are enriched in pro residues. Low complexity-rich tracts occupy residues 369–389 (AGGS…MPPH) and 399–410 (YMPSPYQQQYPP). A compositionally biased stretch (pro residues) spans 423 to 444 (APPPAAYPYPQQPGPGSRPAPS). Residues 449–471 (SAISPDSAPAGSGAPSGSSQQAP) show a composition bias toward low complexity. A compositionally biased stretch (polar residues) spans 472–481 (DVSTATGSSQ).

This Arabidopsis thaliana (Mouse-ear cress) protein is Zinc finger CCCH domain-containing protein 4.